The chain runs to 174 residues: Shikimate kinase 2 (174 aa).

ATP is bound at residue 12 to 17 (GAGKTT). The Mg(2+) site is built by T16 and D32. 3 residues coordinate substrate: D34, R58, and G79. The interval 112–126 (AEDPEEAQRPSLTGK) is LID domain. R120 is an ATP binding site. R139 serves as a coordination point for substrate. Position 155 (Q155) interacts with ATP.

Belongs to the shikimate kinase family. AroL subfamily. As to quaternary structure, monomer. Mg(2+) serves as cofactor.

It localises to the cytoplasm. The catalysed reaction is shikimate + ATP = 3-phosphoshikimate + ADP + H(+). It participates in metabolic intermediate biosynthesis; chorismate biosynthesis; chorismate from D-erythrose 4-phosphate and phosphoenolpyruvate: step 5/7. Its function is as follows. Catalyzes the specific phosphorylation of the 3-hydroxyl group of shikimic acid using ATP as a cosubstrate. The polypeptide is Shikimate kinase 2 (Yersinia pseudotuberculosis serotype IB (strain PB1/+)).